The following is a 98-amino-acid chain: Gas vesicle protein J2 (98 aa).

A disordered region spans residues 75-98 (AGVDADDSKSVLERPDPPTTEGSE). The span at 80–90 (DDSKSVLERPD) shows a compositional bias: basic and acidic residues.

Belongs to the gas vesicle GvpA family. As to quaternary structure, gvpF to GvpM interact with each other in vitro, and may form multi-subunit complex(es). Interacts with GvpA.

It is found in the gas vesicle. Functionally, a minor component of the gas vesicle. Proteins GvpF to GvpM might be involved in nucleating gas vesicle formation. Gas vesicles are hollow, gas filled proteinaceous nanostructures found in several microbial planktonic microorganisms. They allow positioning of halobacteria at the optimal depth for growth in the poorly aerated, shallow brine pools of their habitat. Expression of 2 c-vac DNA fragments containing 2 divergently transcribed regions (gvpE-gvpF-gvpG-gvpH-gvpI-gvpJ-gvpK-gvpL-gvpM and gvpA-gvpC-gvpN-gvpO) allows H.volcanii to produce gas vesicles. This Halobacterium salinarum (strain ATCC 700922 / JCM 11081 / NRC-1) (Halobacterium halobium) protein is Gas vesicle protein J2.